Here is a 242-residue protein sequence, read N- to C-terminus: TGACG-sequence-specific DNA-binding protein TGA-1B (242 aa).

Residues 1–125 form a disordered region; the sequence is EFCDFSGNQA…HSSPNFENNS (125 aa). Positions 18–45 are enriched in polar residues; the sequence is DTSSPELRQSSSGSDVLNATSSTSSHQV. Positions 66-79 are enriched in basic and acidic residues; that stretch reads EGSRESANDNKGLG. A compositionally biased stretch (polar residues) spans 88 to 125; the sequence is SPESQGSGNYGSNVSEGLNYPSDSNKSVHSSPNFENNS. In terms of domain architecture, bZIP spans 183-242; the sequence is DEKKRARLVRNRESAQLSRQRKKHYVEELEDKVRIMHSTIQDLNAKVAYIIAENATLKTQ. A basic motif region spans residues 185 to 216; that stretch reads KKRARLVRNRESAQLSRQRKKHYVEELEDKVR. Positions 225-239 are leucine-zipper; that stretch reads LNAKVAYIIAENATL.

This sequence belongs to the bZIP family.

Its subcellular location is the nucleus. Its function is as follows. Binds specifically to the DNA sequence 5'-TGACG-3'. This chain is TGACG-sequence-specific DNA-binding protein TGA-1B (TGA1B), found in Nicotiana tabacum (Common tobacco).